We begin with the raw amino-acid sequence, 435 residues long: Adenylosuccinate synthetase (435 aa).

GTP-binding positions include 22–28 (GDEGKGK) and 50–52 (GHT). Asp-23 (proton acceptor) is an active-site residue. Mg(2+)-binding residues include Asp-23 and Gly-50. IMP contacts are provided by residues 23-26 (DEGK), 48-51 (NAGH), Thr-140, Arg-154, Gln-235, Thr-250, and Arg-314. The Proton donor role is filled by His-51. A substrate-binding site is contributed by 310–316 (ATTGRKR). GTP-binding positions include Arg-316, 342–344 (KLD), and 424–426 (SVG).

The protein belongs to the adenylosuccinate synthetase family. In terms of assembly, homodimer. It depends on Mg(2+) as a cofactor.

The protein resides in the cytoplasm. It catalyses the reaction IMP + L-aspartate + GTP = N(6)-(1,2-dicarboxyethyl)-AMP + GDP + phosphate + 2 H(+). It functions in the pathway purine metabolism; AMP biosynthesis via de novo pathway; AMP from IMP: step 1/2. In terms of biological role, plays an important role in the de novo pathway of purine nucleotide biosynthesis. Catalyzes the first committed step in the biosynthesis of AMP from IMP. In Chlorobaculum parvum (strain DSM 263 / NCIMB 8327) (Chlorobium vibrioforme subsp. thiosulfatophilum), this protein is Adenylosuccinate synthetase.